Here is a 642-residue protein sequence, read N- to C-terminus: Threonine--tRNA ligase (642 aa).

A TGS domain is found at 1–58 (MQVAGKELEVQQGALCGEVLKEALSKKQFKNVVVAKCGDTLLDLTTTVPADCTDLEPV). A catalytic region spans residues 239 to 530 (DHRKLGTQLD…LLEHTGGALP (292 aa)). Residues Cys331, His382, and His507 each coordinate Zn(2+).

This sequence belongs to the class-II aminoacyl-tRNA synthetase family. Homodimer. Zn(2+) is required as a cofactor.

The protein localises to the cytoplasm. It carries out the reaction tRNA(Thr) + L-threonine + ATP = L-threonyl-tRNA(Thr) + AMP + diphosphate + H(+). Catalyzes the attachment of threonine to tRNA(Thr) in a two-step reaction: L-threonine is first activated by ATP to form Thr-AMP and then transferred to the acceptor end of tRNA(Thr). Also edits incorrectly charged L-seryl-tRNA(Thr). In Maridesulfovibrio salexigens (strain ATCC 14822 / DSM 2638 / NCIMB 8403 / VKM B-1763) (Desulfovibrio salexigens), this protein is Threonine--tRNA ligase.